Reading from the N-terminus, the 340-residue chain is Erlin-2 (340 aa).

Residues 1–3 lie on the Cytoplasmic side of the membrane; it reads MAQ. Residues 4–24 form a helical membrane-spanning segment; the sequence is LGAVVAVASSFFCASLFSAVH. Residues 25 to 340 lie on the Lumenal side of the membrane; that stretch reads KIEEGHIGVY…EPLEAPTKEN (316 aa). Asparagine 106 carries an N-linked (GlcNAc...) asparagine glycan. The tract at residues 177 to 309 is interaction with ERLIN1; sequence EAIRRNYELM…DIPNMFMDSA (133 aa). At lysine 267 the chain carries N6-acetyllysine.

The protein belongs to the band 7/mec-2 family. In terms of assembly, forms a heteromeric complex with ERLIN1. In complex with ERLIN1, interacts with RNF170. Interacts with activated ITPR1, independently of the degree of ITPR1 polyubiquitination. Interacts with SCAP, INSIG1, SREBF1 and SREBF2 under cholesterol sufficiency conditions; indicative for an association with the SCAP-SREBP-INSIG complex. Probably part of an AMFR/gp78 and INSIG1-containing ubiquitin ligase complex involved in ERAD of HMGCR. Interacts with TMUB1; TMUB1 bridges the association with AMFR. Interacts with SYVN1 and RNF139. Interacts with TMEM259. Interacts with TMEM41B. In terms of processing, deubiquitinated by USP25; leading to stabilization.

It localises to the endoplasmic reticulum membrane. Its function is as follows. Component of the ERLIN1/ERLIN2 complex which mediates the endoplasmic reticulum-associated degradation (ERAD) of inositol 1,4,5-trisphosphate receptors (IP3Rs) such as ITPR1. Promotes sterol-accelerated ERAD of HMGCR probably implicating an AMFR/gp78-containing ubiquitin ligase complex. Involved in regulation of cellular cholesterol homeostasis by regulation the SREBP signaling pathway. May promote ER retention of the SCAP-SREBF complex. The sequence is that of Erlin-2 (Erlin2) from Mus musculus (Mouse).